Consider the following 123-residue polypeptide: MKKINKDIGSFSEDLAKKYLEKNDYSILDCNFKNFLGEIDIICKKNTLLIIVEVKSRYNNNYGLPRESVNFSKQRSIIKVANSYINYKRLPNINVRFDVIEVYLNLESTNFKINHIKDAFRLN.

Belongs to the UPF0102 family.

The sequence is that of UPF0102 protein Cbei_1183 from Clostridium beijerinckii (strain ATCC 51743 / NCIMB 8052) (Clostridium acetobutylicum).